Reading from the N-terminus, the 357-residue chain is tRNA/tmRNA (uracil-C(5))-methyltransferase (357 aa).

5 residues coordinate S-adenosyl-L-methionine: glutamine 180, tyrosine 209, asparagine 214, glutamate 230, and aspartate 290. The Nucleophile role is filled by cysteine 315. The Proton acceptor role is filled by glutamate 349.

It belongs to the class I-like SAM-binding methyltransferase superfamily. RNA M5U methyltransferase family. TrmA subfamily.

It carries out the reaction uridine(54) in tRNA + S-adenosyl-L-methionine = 5-methyluridine(54) in tRNA + S-adenosyl-L-homocysteine + H(+). The enzyme catalyses uridine(341) in tmRNA + S-adenosyl-L-methionine = 5-methyluridine(341) in tmRNA + S-adenosyl-L-homocysteine + H(+). Dual-specificity methyltransferase that catalyzes the formation of 5-methyluridine at position 54 (m5U54) in all tRNAs, and that of position 341 (m5U341) in tmRNA (transfer-mRNA). The chain is tRNA/tmRNA (uracil-C(5))-methyltransferase from Campylobacter jejuni subsp. jejuni serotype O:23/36 (strain 81-176).